The chain runs to 273 residues: Chondrolectin (273 aa).

A signal peptide spans 1–21 (MIRIASLLLGAALLCAQGAFA). The Extracellular segment spans residues 22-216 (RRVVSGQKVC…VVTEAGIIPN (195 aa)). Residues 35-179 (VKHPCYKMAY…CNMKHNYICK (145 aa)) form the C-type lectin domain. Disulfide bonds link C61–C178 and C144–C170. N-linked (GlcNAc...) asparagine glycosylation is present at N86. The helical transmembrane segment at 217 to 237 (LIYVIIPTIPLLLLILVALGT) threads the bilayer. Topologically, residues 238–273 (CCFQMLHKSKGRSKTSPNQSTLWISKSTRKESGMEV) are cytoplasmic. Residues 247–273 (KGRSKTSPNQSTLWISKSTRKESGMEV) are disordered. Over residues 251–263 (KTSPNQSTLWISK) the composition is skewed to polar residues.

Interacts with RABGGTB. In adult mice preferentially expressed in skeletal muscle, testis, brain, and lung. Expressed in striated muscle (at protein level). Expressed in spinal cord. Detected in spinal cord fast motor neurons (at protein level).

The protein localises to the membrane. May play a role in the development of the nervous system such as in neurite outgrowth and elongation. May be involved in motor axon growth and guidance. The sequence is that of Chondrolectin (Chodl) from Mus musculus (Mouse).